A 379-amino-acid chain; its full sequence is D-threonine aldolase (379 aa).

Lys-59 carries the N6-(pyridoxal phosphate)lysine modification.

The protein belongs to the DSD1 family. The cofactor is pyridoxal 5'-phosphate. Mn(2+) is required as a cofactor. Co(2+) serves as cofactor. Requires Ni(2+) as cofactor. It depends on Mg(2+) as a cofactor.

It catalyses the reaction D-threonine = acetaldehyde + glycine. It carries out the reaction D-allo-threonine = acetaldehyde + glycine. Its activity is regulated as follows. Inhibited by the carbonyl reagents hydroxylamine, phenylhydrazine and semicarbazide. Inhibited by the chelating agent EDTA. Inhibited by the sulfhydryl reagent p-chloromercuribenzoic acid, and by sodium cyanide. Inhibited by iodoacetate, Ag(2)SO(4), HgCl(2) and CdCl(2). Competitively inhibited by beta-hydroxyaspartate and O-phospho-DL-threonine. Functionally, catalyzes the reversible cleavage of D-threonine or D-allothreonine into glycine and acetaldehyde. Can also cleave D-beta-phenylserine, D-beta-hydroxy-alpha-aminovaleric acid, D-beta-3,4-dihydroxyphenylserine and D-beta-3,4-methylenedioxyphenylserine into glycine and the corresponding aldehyde compounds. Inactive towards D-serine, beta-hydroxyaspartate and O-phospho-DL-threonine. The sequence is that of D-threonine aldolase from Arthrobacter sp.